A 491-amino-acid chain; its full sequence is MNNNIYEDISKRTQGDIYIGVVGPVRTGKSTFIRKFMEKLVIPNIDNEFKKDRTRDEIPQSGSGKTIMTVEPKFVPADGVEIKIKDTVSLKVRMVDCVGYIVEGALGHEEGGKQRLVSTPWSQEAMTFEKAAEIGTKKVIKDHSTIGIVVLTDGSVTGIDRKSYVEPEERVIQELKNLKKPFAVVLNTLSPKSEETSMLRSELEEKYEVPVLPMNVVEMEEEDIEEVMEAVLYDFPLTEIRINLPKWVEGLERNHWIKSSIITTLKQSIIDIGKIRDIEGIIQGFSELEFLEDTGVDNVELGEGVINIDLQTKQDLFYNVLEEKSGFKIEGDYQLLSLITRLSKVKNEYDKIESALIDAKIKGYGVVAPSLEELSLEEPEIMKQGKQYGIKLKANAPSLHIIKADISTEVSPIVGNQNQGEEMIKYLMEVFEEQPADLWESNMFGKSLHDLVKEQLQSKLYTMPEEIRVKMQKTLQKIVNEGSSNIITILL.

The Walker A motif; involved in ATP-binding signature appears at 23–30; the sequence is GPVRTGKS. Residue 23 to 30 participates in ATP binding; sequence GPVRTGKS. The stretch at 334–362 forms a coiled coil; sequence QLLSLITRLSKVKNEYDKIESALIDAKIK.

As to quaternary structure, interacts (via Walker A motif) with SipL (via C-terminus LysM domain).

The protein resides in the cytoplasm. It catalyses the reaction ATP + H2O = ADP + phosphate + H(+). Functionally, ATPase. Has a role at an early stage in the morphogenesis of the spore coat and is required for proper coat localization to the forespore. The polypeptide is Stage IV sporulation protein A (Clostridioides difficile (strain 630) (Peptoclostridium difficile)).